The primary structure comprises 51 residues: Large ribosomal subunit protein eL39 (51 aa).

It belongs to the eukaryotic ribosomal protein eL39 family.

This Sulfurisphaera tokodaii (strain DSM 16993 / JCM 10545 / NBRC 100140 / 7) (Sulfolobus tokodaii) protein is Large ribosomal subunit protein eL39.